Here is a 677-residue protein sequence, read N- to C-terminus: Methionine--tRNA ligase (677 aa).

The 'HIGH' region motif lies at 15–25 (PYANGSIHLGH). Zn(2+) contacts are provided by C146, C149, C159, and C162. The 'KMSKS' region motif lies at 333 to 337 (KMSKS). K336 serves as a coordination point for ATP. The tRNA-binding domain maps to 575-677 (DFAKVDLRVA…AGAKPGHQVK (103 aa)).

This sequence belongs to the class-I aminoacyl-tRNA synthetase family. MetG type 1 subfamily. In terms of assembly, homodimer. It depends on Zn(2+) as a cofactor.

The protein localises to the cytoplasm. The enzyme catalyses tRNA(Met) + L-methionine + ATP = L-methionyl-tRNA(Met) + AMP + diphosphate. Functionally, is required not only for elongation of protein synthesis but also for the initiation of all mRNA translation through initiator tRNA(fMet) aminoacylation. This Escherichia coli (strain SE11) protein is Methionine--tRNA ligase.